The chain runs to 122 residues: UPF0231 protein VIBHAR_03438 (122 aa).

Belongs to the UPF0231 family.

The chain is UPF0231 protein VIBHAR_03438 from Vibrio campbellii (strain ATCC BAA-1116).